A 163-amino-acid chain; its full sequence is Cytosolic iron-sulfur assembly component 2B (163 aa).

Belongs to the MIP18 family.

It is found in the nucleus. The protein resides in the cytoplasm. The protein localises to the cytoskeleton. Its subcellular location is the spindle. Its function is as follows. Component of the cytosolic iron-sulfur (Fe/S) protein assembly machinery. Required for the maturation of extramitochondrial Fe/S proteins. May play a role in chromosome segregation through establishment of sister chromatid cohesion. This is Cytosolic iron-sulfur assembly component 2B from Dictyostelium discoideum (Social amoeba).